A 290-amino-acid polypeptide reads, in one-letter code: MKRTPHLLAIQSHVVFGHAGNSAAVFPMQRIGVNAWPLNTVQFSNHTQYGQWAGEVLAPAQIPALVEGISNIGELGHCDAVLSGYLGSAEQGRAILAGVERIKAVNPKALYLCDPVMGHPEKGCIVPPEVSEFLLDEAAATADILCPNQLELDSFCGRRAQSLEDCVNMARSLLQRGPQVVLVKHLAYPGRAEEQFEMLLVTAEHSWHLRRPLLAFPRQPVGVGDLTSGLFLARVLLGDSWVQAFEFTAAAVHEVLLETQACASYELQLVRAQDRIAHPRVRFEAQLLAL.

Substrate-binding positions include serine 12 and 47-48 (TQ). ATP-binding positions include aspartate 114, glutamate 151, lysine 184, and 211–214 (RPLL). Aspartate 225 contributes to the substrate binding site.

The protein belongs to the pyridoxine kinase family. PdxY subfamily. In terms of assembly, homodimer. Mg(2+) serves as cofactor.

The catalysed reaction is pyridoxal + ATP = pyridoxal 5'-phosphate + ADP + H(+). It participates in cofactor metabolism; pyridoxal 5'-phosphate salvage; pyridoxal 5'-phosphate from pyridoxal: step 1/1. In terms of biological role, pyridoxal kinase involved in the salvage pathway of pyridoxal 5'-phosphate (PLP). Catalyzes the phosphorylation of pyridoxal to PLP. The protein is Pyridoxal kinase PdxY of Pseudomonas putida (strain ATCC 700007 / DSM 6899 / JCM 31910 / BCRC 17059 / LMG 24140 / F1).